The sequence spans 167 residues: Mitochondrial inner membrane protease subunit 1 (167 aa).

Residues Ser40 and Lys83 contribute to the active site.

It belongs to the peptidase S26 family. IMP1 subfamily. As to quaternary structure, heterodimer of 2 subunits, IMMPL1 and IMMPL2.

Its subcellular location is the mitochondrion inner membrane. In terms of biological role, catalyzes the removal of transit peptides required for the targeting of proteins from the mitochondrial matrix, across the inner membrane, into the inter-membrane space. The polypeptide is Mitochondrial inner membrane protease subunit 1 (immp1l) (Xenopus tropicalis (Western clawed frog)).